The primary structure comprises 595 residues: Aspartate--tRNA(Asp/Asn) ligase (595 aa).

Residue Glu-175 coordinates L-aspartate. Residues 199-202 (QQYK) are aspartate. L-aspartate is bound by residues Arg-221 and His-454. ATP is bound at residue 221–223 (RDE). ATP is bound at residue Glu-488. Residue Arg-495 participates in L-aspartate binding. 540 to 543 (GIDR) is a binding site for ATP.

It belongs to the class-II aminoacyl-tRNA synthetase family. Type 1 subfamily. In terms of assembly, homodimer.

It localises to the cytoplasm. The catalysed reaction is tRNA(Asx) + L-aspartate + ATP = L-aspartyl-tRNA(Asx) + AMP + diphosphate. In terms of biological role, aspartyl-tRNA synthetase with relaxed tRNA specificity since it is able to aspartylate not only its cognate tRNA(Asp) but also tRNA(Asn). Reaction proceeds in two steps: L-aspartate is first activated by ATP to form Asp-AMP and then transferred to the acceptor end of tRNA(Asp/Asn). The polypeptide is Aspartate--tRNA(Asp/Asn) ligase (Sinorhizobium fredii (strain NBRC 101917 / NGR234)).